A 395-amino-acid chain; its full sequence is L-methionine gamma-lyase (395 aa).

Pyridoxal 5'-phosphate is bound by residues 56 to 58 (YTR) and 86 to 87 (GM). Residue Tyr111 coordinates substrate. 206–208 (SVT) is a pyridoxal 5'-phosphate binding site. The residue at position 209 (Lys209) is an N6-(pyridoxal phosphate)lysine. Residue Arg373 coordinates substrate.

This sequence belongs to the trans-sulfuration enzymes family. L-methionine gamma-lyase subfamily. As to quaternary structure, homotetramer. Pyridoxal 5'-phosphate serves as cofactor.

It carries out the reaction L-methionine + H2O = methanethiol + 2-oxobutanoate + NH4(+). It catalyses the reaction L-homocysteine + H2O = 2-oxobutanoate + hydrogen sulfide + NH4(+) + H(+). Its function is as follows. Catalyzes the alpha,gamma-elimination of L-methionine to produce methanethiol, 2-oxobutanoate and ammonia; methanethiol (methyl mercaptan) is considered to be one of the main causes of the oral malodor associated with periodontitis. Also displays homocysteine desulfhydrase activity, degrading homocysteine to produce hydrogen sulfide, 2-oxobutanoate and ammonia. L-cysteine and S-methyl-L-cysteine are poor substrates for the enzyme. Plays an important role in the resistance of F.nucleatum to the antibacterial agent 3-chloro-DL-alanine (3CA), thanks to its 3CA chloride-lyase (deaminating) activity. The protein is L-methionine gamma-lyase of Fusobacterium nucleatum subsp. polymorphum (Fusobacterium polymorphum).